The sequence spans 1538 residues: Lysophospholipase nte1 (1538 aa).

Over 1 to 74 the chain is Cytoplasmic; that stretch reads MATDGGPLAA…PPPTPSTMAG (74 aa). A helical transmembrane segment spans residues 75-95; the sequence is WFGWVFSFFFQVIPSVLYWVI. At 96-117 the chain is on the lumenal side; that stretch reads TFATITLPTWLFTLFSMSLTFT. A helical membrane pass occupies residues 118–138; that stretch reads MNFTTLLLIALAIVSTISWFI. Residues 139–1538 lie on the Cytoplasmic side of the membrane; that stretch reads RYRFLNMYSR…RTLAPRRASI (1400 aa). 3 disordered regions span residues 242 to 264, 302 to 393, and 529 to 559; these read KPNV…DHRV, EGSS…KSVH, and AAQS…GDLL. Low complexity predominate over residues 302 to 314; sequence EGSSSSASSVGPS. A compositionally biased stretch (basic and acidic residues) spans 329–345; that stretch reads GLEDSPRSNFVRDHGDS. A nucleoside 3',5'-cyclic phosphate contacts are provided by residues 692–811 and 856–976; these read GGTS…QGYV and RLTS…IAQR. One can recognise a PNPLA domain in the interval 1235-1399; sequence LVLGGGGARG…IDNLTVTHMK (165 aa). Residues 1239–1244 carry the GXGXXG motif; that stretch reads GGGARG. The GXSXG signature appears at 1266-1270; the sequence is GTSIG. Ser-1268 serves as the catalytic Nucleophile. Asp-1386 (proton acceptor) is an active-site residue. A DGA/G motif is present at residues 1386–1388; it reads DGG. The disordered stretch occupies residues 1517-1538; the sequence is LPEETEEKKKLQRTLAPRRASI.

It belongs to the NTE family.

The protein localises to the endoplasmic reticulum membrane. It carries out the reaction a 1-acyl-sn-glycero-3-phosphocholine + H2O = sn-glycerol 3-phosphocholine + a fatty acid + H(+). With respect to regulation, inhibited by organophosphorus esters. Its function is as follows. Intracellular phospholipase B that catalyzes the double deacylation of phosphatidylcholine (PC) to glycerophosphocholine (GroPCho). Plays an important role in membrane lipid homeostasis. Responsible for the rapid PC turnover in response to inositol, elevated temperatures, or when choline is present in the growth medium. The polypeptide is Lysophospholipase nte1 (nte1) (Aspergillus oryzae (strain ATCC 42149 / RIB 40) (Yellow koji mold)).